The chain runs to 264 residues: Thymidylate synthase (264 aa).

Arginine 21 lines the dUMP pocket. Histidine 51 is a binding site for (6R)-5,10-methylene-5,6,7,8-tetrahydrofolate. 126–127 contacts dUMP; that stretch reads RR. Residue cysteine 146 is the Nucleophile of the active site. Residues 166–169, asparagine 177, and 207–209 each bind dUMP; these read RSCD and HLY. Aspartate 169 contacts (6R)-5,10-methylene-5,6,7,8-tetrahydrofolate. Alanine 263 is a binding site for (6R)-5,10-methylene-5,6,7,8-tetrahydrofolate.

The protein belongs to the thymidylate synthase family. Bacterial-type ThyA subfamily. In terms of assembly, homodimer.

Its subcellular location is the cytoplasm. It carries out the reaction dUMP + (6R)-5,10-methylene-5,6,7,8-tetrahydrofolate = 7,8-dihydrofolate + dTMP. It participates in pyrimidine metabolism; dTTP biosynthesis. Functionally, catalyzes the reductive methylation of 2'-deoxyuridine-5'-monophosphate (dUMP) to 2'-deoxythymidine-5'-monophosphate (dTMP) while utilizing 5,10-methylenetetrahydrofolate (mTHF) as the methyl donor and reductant in the reaction, yielding dihydrofolate (DHF) as a by-product. This enzymatic reaction provides an intracellular de novo source of dTMP, an essential precursor for DNA biosynthesis. In Pectobacterium atrosepticum (strain SCRI 1043 / ATCC BAA-672) (Erwinia carotovora subsp. atroseptica), this protein is Thymidylate synthase.